The chain runs to 255 residues: tRNA (guanine-N(1)-)-methyltransferase (255 aa).

Residues Gly-113 and 133 to 138 (IGDYVL) contribute to the S-adenosyl-L-methionine site.

It belongs to the RNA methyltransferase TrmD family. In terms of assembly, homodimer.

It is found in the cytoplasm. The enzyme catalyses guanosine(37) in tRNA + S-adenosyl-L-methionine = N(1)-methylguanosine(37) in tRNA + S-adenosyl-L-homocysteine + H(+). Functionally, specifically methylates guanosine-37 in various tRNAs. The protein is tRNA (guanine-N(1)-)-methyltransferase of Klebsiella pneumoniae (strain 342).